Consider the following 96-residue polypeptide: Large ribosomal subunit protein bL25 (96 aa).

This sequence belongs to the bacterial ribosomal protein bL25 family. In terms of assembly, part of the 50S ribosomal subunit; part of the 5S rRNA/L5/L18/L25 subcomplex. Contacts the 5S rRNA. Binds to the 5S rRNA independently of L5 and L18.

Its function is as follows. This is one of the proteins that binds to the 5S RNA in the ribosome where it forms part of the central protuberance. This is Large ribosomal subunit protein bL25 from Buchnera aphidicola subsp. Schizaphis graminum (strain Sg).